A 200-amino-acid chain; its full sequence is Peroxiredoxin (200 aa).

The region spanning 6–166 (ARIGHLAPGF…ILRLVQAFQF (161 aa)) is the Thioredoxin domain. The active-site Cysteine sulfenic acid (-SOH) intermediate is the Cys-52.

It belongs to the peroxiredoxin family. AhpC/Prx1 subfamily. In terms of assembly, homodimer; disulfide-linked, upon oxidation.

The catalysed reaction is a hydroperoxide + [thioredoxin]-dithiol = an alcohol + [thioredoxin]-disulfide + H2O. Its function is as follows. Thiol-specific peroxidase that catalyzes the reduction of hydrogen peroxide and organic hydroperoxides to water and alcohols, respectively. Plays a role in cell protection against oxidative stress by detoxifying peroxides and as sensor of hydrogen peroxide-mediated signaling events. The sequence is that of Peroxiredoxin from Oncorhynchus mykiss (Rainbow trout).